The sequence spans 304 residues: Homoserine kinase (304 aa).

An ATP-binding site is contributed by 90-100 (PLARGLGSSAS).

The protein belongs to the GHMP kinase family. Homoserine kinase subfamily.

Its subcellular location is the cytoplasm. It carries out the reaction L-homoserine + ATP = O-phospho-L-homoserine + ADP + H(+). The protein operates within amino-acid biosynthesis; L-threonine biosynthesis; L-threonine from L-aspartate: step 4/5. In terms of biological role, catalyzes the ATP-dependent phosphorylation of L-homoserine to L-homoserine phosphate. In Staphylococcus aureus (strain MSSA476), this protein is Homoserine kinase.